We begin with the raw amino-acid sequence, 178 residues long: Large ribosomal subunit protein uL10 (178 aa).

It belongs to the universal ribosomal protein uL10 family. Part of the ribosomal stalk of the 50S ribosomal subunit. The N-terminus interacts with L11 and the large rRNA to form the base of the stalk. The C-terminus forms an elongated spine to which L12 dimers bind in a sequential fashion forming a multimeric L10(L12)X complex.

Its function is as follows. Forms part of the ribosomal stalk, playing a central role in the interaction of the ribosome with GTP-bound translation factors. The protein is Large ribosomal subunit protein uL10 of Dictyoglomus turgidum (strain DSM 6724 / Z-1310).